A 118-amino-acid polypeptide reads, in one-letter code: Large ribosomal subunit protein uL24 (118 aa).

This sequence belongs to the universal ribosomal protein uL24 family. As to quaternary structure, part of the 50S ribosomal subunit.

In terms of biological role, one of two assembly initiator proteins, it binds directly to the 5'-end of the 23S rRNA, where it nucleates assembly of the 50S subunit. Its function is as follows. One of the proteins that surrounds the polypeptide exit tunnel on the outside of the subunit. This is Large ribosomal subunit protein uL24 from Prochlorococcus marinus (strain AS9601).